The following is a 234-amino-acid chain: MSETTPNNTSNNNNNNNNNNNNNNNNNNNNNNNNNNNNNNNNNNHNNNNNTNNNNIDTFSQKASNDIVKPILPVTEDLQNSTKEMFTKVSSYIKSELATTVSDYNLLIQMNNITSSKYQDMTNVTKGLSVFMGDLKIKYEEFQPYFDKINELDKNVTDLEKTVQLLDEYTKRLEQKVKNIDKSSLLPTKQIQPPQPIPQQQPAQPAQPTQPTQPAQQPSQVSTETKPQENIENK.

Disordered regions lie at residues 1-58 and 184-234; these read MSET…NIDT and SLLP…IENK. Low complexity predominate over residues 7-55; the sequence is NNTSNNNNNNNNNNNNNNNNNNNNNNNNNNNNNNNNNNHNNNNNTNNNN. Positions 145 to 184 form a coiled coil; it reads YFDKINELDKNVTDLEKTVQLLDEYTKRLEQKVKNIDKSS. A compositionally biased stretch (low complexity) spans 200–218; the sequence is QQPAQPAQPTQPTQPAQQP.

This sequence belongs to the BLOC1S2 family. Component of the biogenesis of lysosome-related organelles complex 1 (BLOC-1).

It is found in the cytoplasm. The protein localises to the cytoskeleton. The protein resides in the microtubule organizing center. Its subcellular location is the centrosome. It localises to the lysosome membrane. Functionally, component of the BLOC-1 complex, a complex that is required for normal biogenesis of lysosome-related organelles (LRO). May also participate in the coupling of lysosomes to microtubule plus-end-directed kinesin motor. May also play a role in intracellular vesicle trafficking. In Dictyostelium discoideum (Social amoeba), this protein is Biogenesis of lysosome-related organelles complex 1 subunit 2 (bloc1s2).